The chain runs to 178 residues: Large ribosomal subunit protein bL17 (178 aa).

It belongs to the bacterial ribosomal protein bL17 family. Part of the 50S ribosomal subunit. Contacts protein L32.

In Lachnospira eligens (strain ATCC 27750 / DSM 3376 / VPI C15-48 / C15-B4) (Eubacterium eligens), this protein is Large ribosomal subunit protein bL17.